The sequence spans 53 residues: MPITLDPEKLAIVLQHRFNYKICRNCGARNPPDAEKCRRCRSRNLRPKKFKKK.

The protein belongs to the eukaryotic ribosomal protein eL40 family.

This Pyrobaculum calidifontis (strain DSM 21063 / JCM 11548 / VA1) protein is Large ribosomal subunit protein eL40.